A 246-amino-acid chain; its full sequence is Phosphonates import ATP-binding protein PhnC (246 aa).

The region spanning 2-246 is the ABC transporter domain; the sequence is IKFENVSKVY…ILDEVYRKEG (245 aa). 35 to 42 is an ATP binding site; sequence GTSGAGKS.

It belongs to the ABC transporter superfamily. Phosphonates importer (TC 3.A.1.9.1) family. As to quaternary structure, the complex is composed of two ATP-binding proteins (PhnC), two transmembrane proteins (PhnE) and a solute-binding protein (PhnD).

Its subcellular location is the cell membrane. The enzyme catalyses phosphonate(out) + ATP + H2O = phosphonate(in) + ADP + phosphate + H(+). Functionally, part of the ABC transporter complex PhnCDE involved in phosphonates import. Responsible for energy coupling to the transport system. The protein is Phosphonates import ATP-binding protein PhnC of Lactococcus lactis subsp. cremoris (strain SK11).